The chain runs to 565 residues: MSKEFDYIIVGAGSAGNTLATRLTEDASVSVLLLEAGGPDYRFDFRTQMPAALAFPLQGRRYNWAYETDPEPFMDGRRMECGRGKGLGGSSLINGMCYIRGNAMDFDGWAELPGLEDWTYLDCLPYFRKAETRDIGPNDYHGGEGPVSVATPKAGNNPLFHAMVEAGVQAGYPRTEDLNGYQQEGFGPMDRSVTKKGRRSSTARGYLDQAKKRPNLTIVTHALSDRVLFDGKRAVGVTYLVGDSEERVEARARKEVIVSSGAIASPQLLQRSGVGPRALLESLDIPVVHDLPGVGENLQDHLELYLQYACTQPVSLYPSLLWWNQPAIGAEWLFNGTGIGASNQFEAGGFIRTRPEFKWPNIQYHFLPVAINYNGSNGVKEHGFQAHMGSMRSPARGRIQAKSKDPRQHPSILFNYMSTEQDWQEFRDGIRLTREIMAQPALDAFRGREISPGAHVQTDEELDKFIREHAETAFHPSCSCKMGTDDMAVVDGEGRVHGMQGLRVVDASIMPLIITGNLNATTIMIAEKISDKIRGRKPLPRSTAKYYVAGDAPVKGKALREVKQA.

Asp-6–Glu-35 serves as a coordination point for FAD. A disordered region spans residues Gln-182–Ala-203. His-475 (proton acceptor) is an active-site residue.

This sequence belongs to the GMC oxidoreductase family. FAD serves as cofactor.

It catalyses the reaction choline + A = betaine aldehyde + AH2. The enzyme catalyses betaine aldehyde + NAD(+) + H2O = glycine betaine + NADH + 2 H(+). The protein operates within amine and polyamine biosynthesis; betaine biosynthesis via choline pathway; betaine aldehyde from choline (cytochrome c reductase route): step 1/1. Functionally, involved in the biosynthesis of the osmoprotectant glycine betaine. Catalyzes the oxidation of choline to betaine aldehyde and betaine aldehyde to glycine betaine at the same rate. This is Oxygen-dependent choline dehydrogenase from Pseudomonas entomophila (strain L48).